We begin with the raw amino-acid sequence, 397 residues long: Phosphoglycerate kinase (397 aa).

Substrate-binding positions include 21–23 (DFN), Arg37, 60–63 (HLGR), Arg119, and Arg152. ATP is bound by residues Lys203, Gly294, Glu325, and 354 to 357 (GGDS).

Belongs to the phosphoglycerate kinase family. As to quaternary structure, monomer.

The protein localises to the cytoplasm. The catalysed reaction is (2R)-3-phosphoglycerate + ATP = (2R)-3-phospho-glyceroyl phosphate + ADP. It functions in the pathway carbohydrate degradation; glycolysis; pyruvate from D-glyceraldehyde 3-phosphate: step 2/5. The chain is Phosphoglycerate kinase from Chlorobium luteolum (strain DSM 273 / BCRC 81028 / 2530) (Pelodictyon luteolum).